We begin with the raw amino-acid sequence, 412 residues long: Argininosuccinate synthase (412 aa).

Residue 10-18 coordinates ATP; that stretch reads AYSGGLDTS. An L-citrulline-binding site is contributed by Tyr89. Gly119 serves as a coordination point for ATP. Thr121, Asn125, and Asp126 together coordinate L-aspartate. Asn125 contributes to the L-citrulline binding site. Residues Arg129, Ser177, Glu261, and Tyr273 each coordinate L-citrulline.

Belongs to the argininosuccinate synthase family. Type 1 subfamily. In terms of assembly, homotetramer.

It is found in the cytoplasm. The catalysed reaction is L-citrulline + L-aspartate + ATP = 2-(N(omega)-L-arginino)succinate + AMP + diphosphate + H(+). The protein operates within amino-acid biosynthesis; L-arginine biosynthesis; L-arginine from L-ornithine and carbamoyl phosphate: step 2/3. This is Argininosuccinate synthase from Bifidobacterium longum (strain DJO10A).